We begin with the raw amino-acid sequence, 335 residues long: Probable cytosolic iron-sulfur protein assembly protein Ciao1 (335 aa).

WD repeat units lie at residues G12–K51, G57–N96, G101–C140, P146–D185, S192–G231, Q250–E289, and A301–E335.

It belongs to the WD repeat CIA1 family.

Essential component of the cytosolic iron-sulfur (Fe/S) protein assembly machinery. Required for the maturation of extramitochondrial Fe/S proteins. This is Probable cytosolic iron-sulfur protein assembly protein Ciao1 from Drosophila sechellia (Fruit fly).